Reading from the N-terminus, the 538-residue chain is Protein BFR2 (538 aa).

Residues 1–239 form a disordered region; it reads MVKAKGRAKE…AKPMMAALST (239 aa). Basic and acidic residues predominate over residues 7–23; it reads RAKEFQDPDEPITKDYD. 2 stretches are compositionally biased toward acidic residues: residues 80 to 105 and 172 to 222; these read LEEE…PETA and DSED…DEED. Residues 290–363 adopt a coiled-coil conformation; the sequence is YEAAEEAAIK…KWSRKVQSVN (74 aa).

The protein belongs to the AATF family.

The protein localises to the nucleus. It localises to the nucleolus. This is Protein BFR2 (BFR2) from Gibberella zeae (strain ATCC MYA-4620 / CBS 123657 / FGSC 9075 / NRRL 31084 / PH-1) (Wheat head blight fungus).